The primary structure comprises 250 residues: MAWQVSLLELEDWLQCPICLEVFKESLMLQCGHSYCKGCLVSLSYHLDTKVRCPMCWQVVDGSSSLPNVSLAWVIEALRLPGDPEPKVCVHHRNPLSLFCEKDQELICGLCGLLGSHQHHPVTPVSTVCSRMKEELAALFSELKQEQKKVDELIAKLVKNRTRIVNESDVFSWVIRREFQELRHPVDEEKARCLEGIGGHTRGLVASLDMQLEQAQGTRERLAQAECVLEQFGNEDHHEFIWKFHSMASR.

Residues 16 to 57 form an RING-type zinc finger; that stretch reads CPICLEVFKESLMLQCGHSYCKGCLVSLSYHLDTKVRCPMCW. The segment at 84–125 adopts a B box-type zinc-finger fold; the sequence is PEPKVCVHHRNPLSLFCEKDQELICGLCGLLGSHQHHPVTPV. Residues cysteine 89, histidine 92, cysteine 111, and histidine 117 each coordinate Zn(2+). Coiled coils occupy residues 125–169 and 204–235; these read VSTV…NESD and LVAS…FGNE.

The protein belongs to the TRIM/RBCC family.

The polypeptide is Tripartite motif-containing protein 74 (TRIM74) (Homo sapiens (Human)).